The sequence spans 247 residues: MNKQRVTLNCDMGESFGNWKMGSDELVMPWVDMANIACGFHASDPSVMSKTVALAKHYKVKIGAHPGYQDLVGFGRRSIPHTPAQISEIVLYQVGALKAVCQYHDVPLHYVKPHGALYNDMMESEAIFRAICEAVSIFGIPLMILATSDNQHYLDIADIYDVPLLFEAFADRQYQEDGKLTPRSQANAVYHQPEDIYNQALQIATYGSVNTANGTRLSLEADTICVHGDNPESIALVQRISQAIAKM.

This sequence belongs to the LamB/PxpA family. Forms a complex composed of PxpA, PxpB and PxpC.

The enzyme catalyses 5-oxo-L-proline + ATP + 2 H2O = L-glutamate + ADP + phosphate + H(+). Catalyzes the cleavage of 5-oxoproline to form L-glutamate coupled to the hydrolysis of ATP to ADP and inorganic phosphate. This is 5-oxoprolinase subunit A from Vibrio vulnificus (strain CMCP6).